The primary structure comprises 336 residues: Torsin-1B (336 aa).

Positions 1–24 (MRRIGAFGGSTALWALLAAHVAGA) are cleaved as a signal peptide. An N-linked (GlcNAc...) asparagine glycan is attached at N64. Residue 109 to 116 (GWAGTGKN) coordinates ATP. An N-linked (GlcNAc...) asparagine glycan is attached at N165.

The protein belongs to the ClpA/ClpB family. Torsin subfamily. As to quaternary structure, homohexamer. Interacts with TOR1A; the interaction may be specific of neural tissues. Interacts with TOR1AIP1; TOR1AIP1 is required for TOR1B location on the nuclear membrane. Interacts (ATP-bound) with TOR1AIP2; important for endoplasmic reticulum integrity. Post-translationally, N-glycosylated. As to expression, highly expressed in liver and muscle; lower expression levels are observed in brain (at protein level).

It localises to the endoplasmic reticulum lumen. The protein localises to the nucleus membrane. The catalysed reaction is ATP + H2O = ADP + phosphate + H(+). May serve as a molecular chaperone assisting in the proper folding of secreted and/or membrane proteins. Plays a role in non-neural cells nuclear envelope and endoplasmic reticulum integrity. May have a redundant function with TOR1A in non-neural tissues. This chain is Torsin-1B (Tor1b), found in Mus musculus (Mouse).